The primary structure comprises 355 residues: Tetraacyldisaccharide 4'-kinase (355 aa).

An ATP-binding site is contributed by 49-56 (TAGGTGKT).

It belongs to the LpxK family.

It catalyses the reaction a lipid A disaccharide + ATP = a lipid IVA + ADP + H(+). Its pathway is glycolipid biosynthesis; lipid IV(A) biosynthesis; lipid IV(A) from (3R)-3-hydroxytetradecanoyl-[acyl-carrier-protein] and UDP-N-acetyl-alpha-D-glucosamine: step 6/6. Functionally, transfers the gamma-phosphate of ATP to the 4'-position of a tetraacyldisaccharide 1-phosphate intermediate (termed DS-1-P) to form tetraacyldisaccharide 1,4'-bis-phosphate (lipid IVA). The sequence is that of Tetraacyldisaccharide 4'-kinase from Chlorobium luteolum (strain DSM 273 / BCRC 81028 / 2530) (Pelodictyon luteolum).